The following is a 539-amino-acid chain: uncharacterized protein (539 aa).

Disordered stretches follow at residues 179–203 and 433–459; these read SDEL…HSHG and AQAS…HRDE. Acidic residues predominate over residues 182–192; sequence LLPDTGEDSDE. Over residues 433-442 the composition is skewed to low complexity; sequence AQASARAQAR. Residues 443-455 show a composition bias toward basic residues; the sequence is AARRGRSAAKARG.

This sequence belongs to the mycobacterial PPE family.

It is found in the secreted. This is an uncharacterized protein from Mycobacterium tuberculosis (strain CDC 1551 / Oshkosh).